The following is a 353-amino-acid chain: DNA-repair protein XRCC1 (353 aa).

Residues 1–12 (MSQKRNLPSWMS) show a composition bias toward polar residues. Residues 1–57 (MSQKRNLPSWMSSRDPEITPSKSHCKKPKDEGPTEEHNSRNAPSNKSEHAEPSSNTT) are disordered. Residues 28-39 (PKDEGPTEEHNS) are compositionally biased toward basic and acidic residues. Positions 58–146 (EFSKLMEGVV…KLVDIEQYLM (89 aa)) constitute a BRCT 1 domain. The interval 150–194 (KPWRKSSSPQDANREKREHLSKKPEKQVEKKTETRGTPSTSSKNR) is disordered. A compositionally biased stretch (basic and acidic residues) spans 161–183 (ANREKREHLSKKPEKQVEKKTET). Polar residues predominate over residues 184–194 (RGTPSTSSKNR). Positions 240-260 (AAEGVLTCLQDAIDSLEQKQD) form a coiled coil. One can recognise a BRCT 2 domain in the interval 266–347 (ELWSFVPRVV…EEEIELAYRN (82 aa)).

In terms of assembly, homodimer. Interacts with polynucleotide kinase (PNK), DNA polymerase-beta (POLB) and DNA ligase III (LIG3). Interacts with ZDP and ROS1. Binds to various forms of double-stranded DNA (e.g. methylated, unmethylated, with single-nucleotide gap flanked by 3'-phosphate or 5'-phosphate ends).

Its subcellular location is the nucleus. In terms of biological role, corrects defective DNA strand-break repair and sister chromatid exchange following treatment with ionizing radiation and alkylating agents. Involved in DNA demethylation pathway by stimulating cytosine methylation (5-meC) excision, gap tailoring, and DNA ligation. The sequence is that of DNA-repair protein XRCC1 from Arabidopsis thaliana (Mouse-ear cress).